Here is a 227-residue protein sequence, read N- to C-terminus: tRNA (guanine-N(1)-)-methyltransferase (227 aa).

S-adenosyl-L-methionine is bound by residues Gly107 and 127 to 132 (LGDFIL).

The protein belongs to the RNA methyltransferase TrmD family. In terms of assembly, homodimer.

Its subcellular location is the cytoplasm. The enzyme catalyses guanosine(37) in tRNA + S-adenosyl-L-methionine = N(1)-methylguanosine(37) in tRNA + S-adenosyl-L-homocysteine + H(+). In terms of biological role, specifically methylates guanosine-37 in various tRNAs. The chain is tRNA (guanine-N(1)-)-methyltransferase from Mesomycoplasma hyopneumoniae (strain 7448) (Mycoplasma hyopneumoniae).